Reading from the N-terminus, the 174-residue chain is Beta-lactoglobulin (174 aa).

Positions 1–18 (MKFLLLTVGLALIGAIQA) are cleaved as a signal peptide. 2 disulfides stabilise this stretch: C79/C172 and C122/C134.

This sequence belongs to the calycin superfamily. Lipocalin family. As to quaternary structure, monomer.

The protein resides in the secreted. In terms of biological role, lactoglobulin is the primary component of whey, it binds retinol and is probably involved in the transport of that molecule. The protein is Beta-lactoglobulin (LGB) of Notamacropus eugenii (Tammar wallaby).